The chain runs to 464 residues: Sulfoacetaldehyde dehydrogenase (acylating) (464 aa).

Residue Cys-241 is the Nucleophile of the active site.

The protein belongs to the aldehyde dehydrogenase family.

It carries out the reaction sulfoacetaldehyde + NADP(+) + CoA = sulfoacetyl-CoA + NADPH + H(+). Involved in the degradation of sulfoacetate. Catalyzes the conversion of sulfoacetyl-CoA and NADPH to sulfoacetaldehyde, CoA and NADP(+). A much lower level of activity (1%) is observed when NADP(+) is replaced with NAD(+). In Bilophila wadsworthia (strain 3_1_6), this protein is Sulfoacetaldehyde dehydrogenase (acylating).